Here is a 100-residue protein sequence, read N- to C-terminus: NADH-quinone oxidoreductase subunit K (100 aa).

3 helical membrane-spanning segments follow: residues 1–21, 28–48, and 64–84; these read MIGLNHYLIVSGLLFCIGLAG, ILLLFFSTEIMLNAINIGFVA, and FIIAIAASEVAIGLGLVILWF.

The protein belongs to the complex I subunit 4L family. As to quaternary structure, NDH-1 is composed of 14 different subunits. Subunits NuoA, H, J, K, L, M, N constitute the membrane sector of the complex.

Its subcellular location is the cell inner membrane. It catalyses the reaction a quinone + NADH + 5 H(+)(in) = a quinol + NAD(+) + 4 H(+)(out). Functionally, NDH-1 shuttles electrons from NADH, via FMN and iron-sulfur (Fe-S) centers, to quinones in the respiratory chain. The immediate electron acceptor for the enzyme in this species is believed to be ubiquinone. Couples the redox reaction to proton translocation (for every two electrons transferred, four hydrogen ions are translocated across the cytoplasmic membrane), and thus conserves the redox energy in a proton gradient. The protein is NADH-quinone oxidoreductase subunit K of Helicobacter pylori (strain B38).